The primary structure comprises 297 residues: Oxidoreductase aprR (297 aa).

It belongs to the NmrA-type oxidoreductase family. Isoflavone reductase subfamily.

Its pathway is secondary metabolite biosynthesis. Its function is as follows. Oxidoreductase; part of the gene cluster that mediates the biosynthesis of the asperipin-2a, a bicyclic peptide that possesses two macrocyclic ether rings consisting of 14- and 17-membered paracyclophans. The pathway starts with the processing of the precursor aprA by kexin proteases to produce 11 identical copies of the hexapeptide Phe-Tyr-Tyr-Thr-Gly-Tyr. Macrocyclization of asperipin-2a may accompany an alpha-hydroxylation-dehydration sequence to give an imine, which is readily hydrolyzed to yield putative ketone intermediate. The reductase aprR may be required for the final reduction to yield asperipin-2a. The sequence is that of Oxidoreductase aprR from Aspergillus flavus (strain ATCC 200026 / FGSC A1120 / IAM 13836 / NRRL 3357 / JCM 12722 / SRRC 167).